The sequence spans 512 residues: ATP synthase subunit alpha (512 aa).

169–176 (GDRQTGKT) contacts ATP.

Belongs to the ATPase alpha/beta chains family. As to quaternary structure, F-type ATPases have 2 components, CF(1) - the catalytic core - and CF(0) - the membrane proton channel. CF(1) has five subunits: alpha(3), beta(3), gamma(1), delta(1), epsilon(1). CF(0) has three main subunits: a(1), b(2) and c(9-12). The alpha and beta chains form an alternating ring which encloses part of the gamma chain. CF(1) is attached to CF(0) by a central stalk formed by the gamma and epsilon chains, while a peripheral stalk is formed by the delta and b chains.

Its subcellular location is the cell membrane. It carries out the reaction ATP + H2O + 4 H(+)(in) = ADP + phosphate + 5 H(+)(out). Functionally, produces ATP from ADP in the presence of a proton gradient across the membrane. The alpha chain is a regulatory subunit. The polypeptide is ATP synthase subunit alpha (Buchnera aphidicola subsp. Acyrthosiphon pisum (strain Tuc7)).